The following is a 422-amino-acid chain: Serine--tRNA ligase (422 aa).

Residue threonine 226–glutamate 228 coordinates L-serine. Residues arginine 257 to glutamate 259 and valine 273 each bind ATP. Glutamate 280 contributes to the L-serine binding site. Residue glutamate 344–serine 347 coordinates ATP. Threonine 379 is a binding site for L-serine.

This sequence belongs to the class-II aminoacyl-tRNA synthetase family. Type-1 seryl-tRNA synthetase subfamily. Homodimer. The tRNA molecule binds across the dimer.

The protein localises to the cytoplasm. The enzyme catalyses tRNA(Ser) + L-serine + ATP = L-seryl-tRNA(Ser) + AMP + diphosphate + H(+). It carries out the reaction tRNA(Sec) + L-serine + ATP = L-seryl-tRNA(Sec) + AMP + diphosphate + H(+). Its pathway is aminoacyl-tRNA biosynthesis; selenocysteinyl-tRNA(Sec) biosynthesis; L-seryl-tRNA(Sec) from L-serine and tRNA(Sec): step 1/1. Catalyzes the attachment of serine to tRNA(Ser). Is also able to aminoacylate tRNA(Sec) with serine, to form the misacylated tRNA L-seryl-tRNA(Sec), which will be further converted into selenocysteinyl-tRNA(Sec). The protein is Serine--tRNA ligase of Corynebacterium glutamicum (strain ATCC 13032 / DSM 20300 / JCM 1318 / BCRC 11384 / CCUG 27702 / LMG 3730 / NBRC 12168 / NCIMB 10025 / NRRL B-2784 / 534).